We begin with the raw amino-acid sequence, 518 residues long: Glutamate--cysteine ligase (518 aa).

This sequence belongs to the glutamate--cysteine ligase type 1 family. Type 1 subfamily.

It carries out the reaction L-cysteine + L-glutamate + ATP = gamma-L-glutamyl-L-cysteine + ADP + phosphate + H(+). Its pathway is sulfur metabolism; glutathione biosynthesis; glutathione from L-cysteine and L-glutamate: step 1/2. The protein is Glutamate--cysteine ligase of Escherichia coli O139:H28 (strain E24377A / ETEC).